The following is a 544-amino-acid chain: Membrane protein insertase YidC (544 aa).

5 consecutive transmembrane segments (helical) span residues 13–33 (LSLF…SNIL), 343–363 (WGLS…PLTF), 409–429 (LGGC…YSLV), 461–481 (LYFV…FTQL), and 506–526 (MPIM…IYWI).

This sequence belongs to the OXA1/ALB3/YidC family. Type 1 subfamily. In terms of assembly, interacts with the Sec translocase complex via SecD. Specifically interacts with transmembrane segments of nascent integral membrane proteins during membrane integration.

It is found in the cell inner membrane. Functionally, required for the insertion and/or proper folding and/or complex formation of integral membrane proteins into the membrane. Involved in integration of membrane proteins that insert both dependently and independently of the Sec translocase complex, as well as at least some lipoproteins. Aids folding of multispanning membrane proteins. This chain is Membrane protein insertase YidC, found in Borreliella burgdorferi (strain ZS7) (Borrelia burgdorferi).